We begin with the raw amino-acid sequence, 137 residues long: Small ribosomal subunit protein uS9c (137 aa).

Residues 106-137 are disordered; the sequence is KSEGYLTRDPRVKERKKYGLKKARKAPQFSKR. Positions 118 to 137 are enriched in basic residues; that stretch reads KERKKYGLKKARKAPQFSKR.

Belongs to the universal ribosomal protein uS9 family.

Its subcellular location is the plastid. The protein resides in the chloroplast. This Pyropia yezoensis (Susabi-nori) protein is Small ribosomal subunit protein uS9c (rps9).